The following is a 185-amino-acid chain: MTNFVHKTVNGLKSLLDEKGAIKLFCSEGDIMEFLVTFSQDKATLNDIQSFEAKHQLTLPQDYQKFMTLHNGAKIFEILSDGENIGGGLQLFSLEEIEEELKYEDLFEDINGIPIGYLLEECHLMIDKDKVNQGDPNYLYIFESGLEYNPLNLNFEKFLDRYILANGEPFWDWRYYTAENYYRTR.

This is an uncharacterized protein from Bacillus subtilis (strain 168).